The primary structure comprises 290 residues: UPF0761 membrane protein ASA_4118 (290 aa).

6 helical membrane-spanning segments follow: residues L48–F68, N104–I124, F144–I164, I182–V202, A216–I236, and A250–L270.

This sequence belongs to the UPF0761 family.

It localises to the cell inner membrane. This is UPF0761 membrane protein ASA_4118 from Aeromonas salmonicida (strain A449).